A 248-amino-acid polypeptide reads, in one-letter code: 1-(5-phosphoribosyl)-5-[(5-phosphoribosylamino)methylideneamino] imidazole-4-carboxamide isomerase (248 aa).

Catalysis depends on Asp8, which acts as the Proton acceptor. Catalysis depends on Asp129, which acts as the Proton donor.

Belongs to the HisA/HisF family.

It is found in the cytoplasm. The catalysed reaction is 1-(5-phospho-beta-D-ribosyl)-5-[(5-phospho-beta-D-ribosylamino)methylideneamino]imidazole-4-carboxamide = 5-[(5-phospho-1-deoxy-D-ribulos-1-ylimino)methylamino]-1-(5-phospho-beta-D-ribosyl)imidazole-4-carboxamide. It participates in amino-acid biosynthesis; L-histidine biosynthesis; L-histidine from 5-phospho-alpha-D-ribose 1-diphosphate: step 4/9. This Sinorhizobium medicae (strain WSM419) (Ensifer medicae) protein is 1-(5-phosphoribosyl)-5-[(5-phosphoribosylamino)methylideneamino] imidazole-4-carboxamide isomerase.